We begin with the raw amino-acid sequence, 575 residues long: Epsin-1 (575 aa).

Residues arginine 8, lysine 11, arginine 25, asparagine 30, arginine 63, and histidine 73 each coordinate a 1,2-diacyl-sn-glycero-3-phospho-(1D-myo-inositol-4,5-bisphosphate). One can recognise an ENTH domain in the interval 12–144 (NIVHNYSEAE…RDEDRLREER (133 aa)). The tract at residues 149 to 186 (KTKEKLAQTATASSAAVGSGPPPEAEQAWPQSSGEEEL) is disordered. Low complexity predominate over residues 157–167 (TATASSAAVGS). UIM domains follow at residues 183 to 202 (EEEL…ADQP), 208 to 227 (EDDV…HDKE), and 233 to 252 (GDDL…TGGK). 2 disordered regions span residues 264-283 (FTTP…ASVP) and 293-575 (SDPW…PFLL). A run of 8 repeats spans residues 274-276 (DPW), 294-296 (DPW), 306-308 (DPW), 319-321 (DPW), 332-334 (DPW), 349-351 (DPW), 367-369 (DPW), and 377-379 (DPW). The tract at residues 274–379 (DPWGGPASVP…APAPAFSDPW (106 aa)) is 8 X 3 AA repeats of D-P-W. Over residues 306 to 316 (DPWGGAAPTPA) the composition is skewed to low complexity. Over residues 333–346 (PWGGTPAPAAGEGP) the composition is skewed to low complexity. Residues 367–379 (DPWAPAPAFSDPW) are compositionally biased toward low complexity. Residue serine 382 is modified to Phosphoserine. The [DE]-X(1,2)-F-X-X-[FL]-X-X-X-R motif motif lies at 401 to 410 (DEFSDFDRLR). A phosphoserine mark is found at serine 418 and serine 419. At threonine 420 the chain carries Phosphothreonine. A phosphoserine mark is found at serine 434, serine 446, and serine 453. Residues 453-467 (SPPPAATPTPTPPTR) show a composition bias toward pro residues. Phosphothreonine occurs at positions 459, 463, and 469. Serine 472 carries the post-translational modification Phosphoserine. Threonine 493 carries the post-translational modification Phosphothreonine. 2 repeat units span residues 501 to 503 (NPF) and 517 to 519 (NPF). The interval 501–573 (NPFLPSGAPA…GPPAPNTNPF (73 aa)) is 3 X 3 AA repeats of N-P-F. Arginine 533 is modified (omega-N-methylarginine). Over residues 556-569 (GLPPMMPPGPPAPN) the composition is skewed to pro residues. Copy 3 of the repeat occupies 571-573 (NPF).

The protein belongs to the epsin family. In terms of assembly, monomer. Binds ITSN1. Binds clathrin, ZBTB16/ZNF145, AP2A1 and AP2A2. Binds ubiquitinated proteins. Interacts with RALBP1 in a complex also containing NUMB and TFAP2A during interphase and mitosis. Interacts with AP2B1. Interacts with UBQLN2. Interacts with REPS2; the interaction is direct. Interacts with EPS15; the interaction is direct. Interacts with ENTREP1. In terms of processing, ubiquitinated. Phosphorylated on serine and/or threonine residues in mitotic cells. Phosphorylation reduces interaction with REPS2, AP-2 and the membrane fraction. Depolarization of synaptosomes results in dephosphorylation. In terms of tissue distribution, ubiquitously expressed. Detected in liver, spleen and testis, and weakly in lung and thymus (at protein level).

It localises to the cytoplasm. The protein localises to the cell membrane. It is found in the nucleus. The protein resides in the membrane. Its subcellular location is the clathrin-coated pit. Binds to membranes enriched in phosphatidylinositol 4,5-bisphosphate (PtdIns(4,5)P2). Modifies membrane curvature and facilitates the formation of clathrin-coated invaginations. Regulates receptor-mediated endocytosis. This is Epsin-1 (Epn1) from Rattus norvegicus (Rat).